We begin with the raw amino-acid sequence, 237 residues long: Cysteine-rich venom protein DIS2 (237 aa).

The signal sequence occupies residues 1–18 (MFVFILLSLAAVLQQSFG). Residues 37–165 (VDKHNAFRRS…SYNYFYVCQY (129 aa)) enclose the SCP domain. 7 disulfide bridges follow: cysteine 74–cysteine 152, cysteine 91–cysteine 166, cysteine 147–cysteine 163, cysteine 185–cysteine 192, cysteine 188–cysteine 197, cysteine 201–cysteine 234, and cysteine 219–cysteine 232. Positions 201–234 (CSREDVFMNCKSLVAQSNCQDDYIRKNCPATCFC) constitute a ShKT domain.

Belongs to the CRISP family. Expressed by the venom gland.

The protein localises to the secreted. Weakly blocks contraction of smooth muscle elicited by high potassium-induced depolarization, but does not block caffeine-stimulated contraction. May target voltage-gated calcium channels on smooth muscle. The chain is Cysteine-rich venom protein DIS2 from Dispholidus typus (Boomslang).